The sequence spans 372 residues: Glutamate 5-kinase (372 aa).

An ATP-binding site is contributed by Lys-14. The substrate site is built by Ser-54, Asp-141, and Asn-153. ATP-binding positions include Thr-173–Asp-174 and Ser-215–Lys-221. The PUA domain occupies Ala-280–Ile-358.

The protein belongs to the glutamate 5-kinase family.

Its subcellular location is the cytoplasm. The catalysed reaction is L-glutamate + ATP = L-glutamyl 5-phosphate + ADP. It functions in the pathway amino-acid biosynthesis; L-proline biosynthesis; L-glutamate 5-semialdehyde from L-glutamate: step 1/2. Functionally, catalyzes the transfer of a phosphate group to glutamate to form L-glutamate 5-phosphate. The sequence is that of Glutamate 5-kinase from Methylobacillus flagellatus (strain ATCC 51484 / DSM 6875 / VKM B-1610 / KT).